Consider the following 131-residue polypeptide: Translation initiation factor 5A (131 aa).

Lys-37 carries the hypusine modification.

It belongs to the eIF-5A family.

The protein resides in the cytoplasm. In terms of biological role, functions by promoting the formation of the first peptide bond. The polypeptide is Translation initiation factor 5A (eIF5A) (Methanococcus vannielii (strain ATCC 35089 / DSM 1224 / JCM 13029 / OCM 148 / SB)).